We begin with the raw amino-acid sequence, 388 residues long: Xylose isomerase (388 aa).

Residues His54 and Asp57 contribute to the active site. Mg(2+)-binding residues include Glu181, Glu217, His220, Asp245, Asp255, Asp257, and Asp287.

Belongs to the xylose isomerase family. In terms of assembly, homotetramer. Mg(2+) is required as a cofactor.

Its subcellular location is the cytoplasm. It catalyses the reaction alpha-D-xylose = alpha-D-xylulofuranose. The polypeptide is Xylose isomerase (Streptomyces avermitilis (strain ATCC 31267 / DSM 46492 / JCM 5070 / NBRC 14893 / NCIMB 12804 / NRRL 8165 / MA-4680)).